Reading from the N-terminus, the 209-residue chain is NAD(P)H-quinone oxidoreductase subunit I (209 aa).

4Fe-4S ferredoxin-type domains are found at residues 55-84 and 95-124; these read GRIHFERPKCISCEVCVRVCPINLPVVDYE and NSYSIDFGVCIFCGNCVEYCPTSCLSMTEE. [4Fe-4S] cluster is bound by residues Cys64, Cys67, Cys70, Cys74, Cys104, Cys107, Cys110, and Cys114.

The protein belongs to the complex I 23 kDa subunit family. As to quaternary structure, NDH-1 is composed of at least 11 different subunits. The cofactor is [4Fe-4S] cluster.

It localises to the cell inner membrane. It carries out the reaction a plastoquinone + NADH + (n+1) H(+)(in) = a plastoquinol + NAD(+) + n H(+)(out). It catalyses the reaction a plastoquinone + NADPH + (n+1) H(+)(in) = a plastoquinol + NADP(+) + n H(+)(out). NDH-1 shuttles electrons from an unknown electron donor, via FMN and iron-sulfur (Fe-S) centers, to quinones in the respiratory and/or the photosynthetic chain. The immediate electron acceptor for the enzyme in this species is believed to be plastoquinone. Couples the redox reaction to proton translocation, and thus conserves the redox energy in a proton gradient. The chain is NAD(P)H-quinone oxidoreductase subunit I from Gloeobacter violaceus (strain ATCC 29082 / PCC 7421).